The sequence spans 63 residues: Large ribosomal subunit protein uL30 (63 aa).

Belongs to the universal ribosomal protein uL30 family. In terms of assembly, part of the 50S ribosomal subunit.

The polypeptide is Large ribosomal subunit protein uL30 (Bradyrhizobium sp. (strain BTAi1 / ATCC BAA-1182)).